Here is a 284-residue protein sequence, read N- to C-terminus: BES1/BZR1 homolog protein 3 (284 aa).

2 disordered regions span residues 1-21 (MTSG…RRER) and 85-116 (GSTS…PSPT). The interval 6–88 (RTPTWKEREN…RMDLMNGSTS (83 aa)) is required for DNA-binding. Positions 85-97 (GSTSASPCSSYQH) are enriched in polar residues. Residues 98-114 (SPRASYNPSPSSSSFPS) show a composition bias toward low complexity. Threonine 153 bears the Phosphothreonine mark.

This sequence belongs to the BZR/LAT61 family. Post-translationally, phosphorylated. Phosphorylation increases protein degradation.

The protein is BES1/BZR1 homolog protein 3 (BEH3) of Arabidopsis thaliana (Mouse-ear cress).